A 475-amino-acid polypeptide reads, in one-letter code: F-box protein SKIP22 (475 aa).

Positions 114–133 (DQAKSNPNTSVEDPEGDISG) are disordered. One can recognise an F-box domain in the interval 319-365 (PPCLMRLPTELKLKILELLPGVSIGNMACVCTEMRYLASDNDLWKQK).

As to quaternary structure, part of a SCF (ASK-cullin-F-box) protein ligase complex. Interacts with SKP1A/ASK1 and SPK1B/ASK2.

It localises to the nucleus. It functions in the pathway protein modification; protein ubiquitination. Component of SCF(ASK-cullin-F-box) E3 ubiquitin ligase complexes, which may mediate the ubiquitination and subsequent proteasomal degradation of target proteins. This chain is F-box protein SKIP22 (SKIP22), found in Arabidopsis thaliana (Mouse-ear cress).